The chain runs to 199 residues: uncharacterized protein (199 aa).

A helical transmembrane segment spans residues 21 to 38 (ISPSATNFIVSLVIMILI).

The protein resides in the membrane. This is an uncharacterized protein from Saccharomyces cerevisiae (strain ATCC 204508 / S288c) (Baker's yeast).